The following is a 59-amino-acid chain: Potassium channel toxin alpha-KTx 16.4 (59 aa).

An N-terminal signal peptide occupies residues 1–22 (MKILSIVLIALIICSISICTEA). Disulfide bonds link C30-C51, C36-C56, and C40-C58.

Belongs to the short scorpion toxin superfamily. Potassium channel inhibitor family. Alpha-KTx 16 subfamily. In terms of tissue distribution, expressed by the venom gland.

The protein localises to the secreted. Its function is as follows. Weak inhibitor of voltage-gated potassium channel hKv1.3/KCNA3. The protein is Potassium channel toxin alpha-KTx 16.4 of Mesobuthus eupeus (Lesser Asian scorpion).